The following is a 235-amino-acid chain: MKKRSRRFSTLLKQIEADKLYSPLDALNLMKNLSNVKFIETAEVHIVLGLDPKYADQQLRTTVMLPKGTGKIMRVAVITQNNKTHEAKSSGADIVGGEDLIDEIKKGRLDFDKLIATPDMMMSIAKLGKILGPKGLMPSPKAGTVTHNLITTIKEFKAGKLEYKIDRSGILHIPFGKLNFNVEDLHINLITLQESIDRNRPQGSKGKYWKSVHINSTMGPSIPLDIQLLRNNYVL.

Belongs to the universal ribosomal protein uL1 family. As to quaternary structure, part of the 50S ribosomal subunit.

The protein resides in the plastid. Its subcellular location is the chloroplast. In terms of biological role, binds directly to 23S rRNA. Might be involved in E site tRNA release (Potential). In Gracilaria tenuistipitata var. liui (Red alga), this protein is Large ribosomal subunit protein uL1c (rpl1).